We begin with the raw amino-acid sequence, 257 residues long: Cytochrome c oxidase subunit 3 (257 aa).

6 consecutive transmembrane segments (helical) span residues Pro15–Phe35, Gly82–Phe102, Phe124–Ala144, Cys156–Leu176, Phe194–Ile214, and Ala235–Trp255.

This sequence belongs to the cytochrome c oxidase subunit 3 family. Component of the cytochrome c oxidase (complex IV, CIV), a multisubunit enzyme composed of a catalytic core of 3 subunits and several supernumerary subunits. The complex exists as a monomer or a dimer and forms supercomplexes (SCs) in the inner mitochondrial membrane with ubiquinol-cytochrome c oxidoreductase (cytochrome b-c1 complex, complex III, CIII).

It is found in the mitochondrion inner membrane. The enzyme catalyses 4 Fe(II)-[cytochrome c] + O2 + 8 H(+)(in) = 4 Fe(III)-[cytochrome c] + 2 H2O + 4 H(+)(out). In terms of biological role, component of the cytochrome c oxidase, the last enzyme in the mitochondrial electron transport chain which drives oxidative phosphorylation. The respiratory chain contains 3 multisubunit complexes succinate dehydrogenase (complex II, CII), ubiquinol-cytochrome c oxidoreductase (cytochrome b-c1 complex, complex III, CIII) and cytochrome c oxidase (complex IV, CIV), that cooperate to transfer electrons derived from NADH and succinate to molecular oxygen, creating an electrochemical gradient over the inner membrane that drives transmembrane transport and the ATP synthase. Cytochrome c oxidase is the component of the respiratory chain that catalyzes the reduction of oxygen to water. Electrons originating from reduced cytochrome c in the intermembrane space (IMS) are transferred via the dinuclear copper A center (CU(A)) of subunit 2 and heme A of subunit 1 to the active site in subunit 1, a binuclear center (BNC) formed by heme A3 and copper B (CU(B)). The BNC reduces molecular oxygen to 2 water molecules using 4 electrons from cytochrome c in the IMS and 4 protons from the mitochondrial matrix. This Artemia franciscana (Brine shrimp) protein is Cytochrome c oxidase subunit 3 (COIII).